A 288-amino-acid polypeptide reads, in one-letter code: Phenazine biosynthesis-like domain-containing protein (288 aa).

The active site involves Glu46.

The protein belongs to the PhzF family. In terms of assembly, interacts with UNRIP/MAWD.

The protein is Phenazine biosynthesis-like domain-containing protein (PBLD) of Pongo abelii (Sumatran orangutan).